The following is a 169-amino-acid chain: NADH-quinone oxidoreductase subunit B (169 aa).

[4Fe-4S] cluster is bound by residues cysteine 42, cysteine 43, cysteine 107, and cysteine 136.

Belongs to the complex I 20 kDa subunit family. NDH-1 is composed of 14 different subunits. Subunits NuoB, C, D, E, F, and G constitute the peripheral sector of the complex. The cofactor is [4Fe-4S] cluster.

It is found in the cell inner membrane. It carries out the reaction a quinone + NADH + 5 H(+)(in) = a quinol + NAD(+) + 4 H(+)(out). Its function is as follows. NDH-1 shuttles electrons from NADH, via FMN and iron-sulfur (Fe-S) centers, to quinones in the respiratory chain. The immediate electron acceptor for the enzyme in this species is believed to be ubiquinone. Couples the redox reaction to proton translocation (for every two electrons transferred, four hydrogen ions are translocated across the cytoplasmic membrane), and thus conserves the redox energy in a proton gradient. The protein is NADH-quinone oxidoreductase subunit B of Nitratiruptor sp. (strain SB155-2).